A 345-amino-acid polypeptide reads, in one-letter code: Nuclear distribution protein nudE-like 1 (345 aa).

Positions 28–190 form a coiled coil; it reads QSFQEARDEL…LAVRERQQEV (163 aa). Positions 56 to 166 are self-association; sequence VQAEQRNRDL…LDEKESLLVS (111 aa). The interaction with KATNB1 stretch occupies residues 64–189; it reads DLQADNQRLK…ELAVRERQQE (126 aa). Residues 114–133 form a required for interaction with PAFAH1B1 region; the sequence is YVRELEQANDDLERAKRATI. The interval 175-345 is interaction with CENPF; sequence RDLRQELAVR…SAPGMLPLSV (171 aa). The tract at residues 189 to 256 is interaction with YWHAE; it reads EVTRKSAPSS…SARISALNIV (68 aa). The interaction with NEFL stretch occupies residues 191 to 345; it reads TRKSAPSSPT…SAPGMLPLSV (155 aa). Positions 195 to 256 are interaction with KATNA1; that stretch reads APSSPTLDCE…SARISALNIV (62 aa). Serine 215 bears the Phosphoserine mark. The segment at 217–240 is disordered; sequence PATPVGKGTENSFPSPKAIPNGFG. Threonine 219 is subject to Phosphothreonine. Serine 231 carries the phosphoserine modification. An interaction with DISC1 region spans residues 241 to 280; it reads TSPLTPSARISALNIVGDLLRKVGALESKLAACRNFAKDQ. Serine 242 is modified (phosphoserine; by CDK1). Threonine 245 bears the Phosphothreonine; by CDK1 and MAPK1 mark. The interval 256–291 is required for localization to the centrosome and interaction with dynein, dynactin, tubulin gamma, PCM1 and PCNT; it reads VGDLLRKVGALESKLAACRNFAKDQASRKSYVPGSV. The S-palmitoyl cysteine; by ZDHHC2, ZDHHC3 and ZDHHC7 moiety is linked to residue cysteine 273. Residues 314-345 form a disordered region; that stretch reads KGAVNGFDPAPPPPGLGSSRPSSAPGMLPLSV. The span at 329 to 339 shows a compositional bias: low complexity; the sequence is LGSSRPSSAPG. Serine 344 is subject to Phosphoserine.

Belongs to the nudE family. As to quaternary structure, interacts with PLEKHM1 (via N- and C-terminus). Interacts with dynactin, PCM1 and PCNT. Interacts (via C-terminus) with CENPF. Self-associates. Interacts with DISC1, dynein, tubulin gamma, KATNA1, KATNB1, microtubules, PAFAHB1 and YWHAE. Interacts directly with NEFL and indirectly with NEFH. Interacts with ZNF365. Interacts with GTP-bound RAB9A; the interaction may lead to RAB9A-dynein motor tethering. Post-translationally, phosphorylated by CDK1 and MAPK1. Phosphorylated in mitosis. Phosphorylated by CDK5. Phosphorylation by CDK5 promotes interaction with KATNA1 and YWHAE. Palmitoylation at Cys-273 reduces affinity for dynein. As to expression, expressed in brain, liver, lung and testis (at protein level). Expressed in brain, epididymis, eye, heart, kidney, large intestine, liver, ovary, pancreas, prostate, skeletal muscle, smooth muscle, spleen, submaxillary gland, testis, thymus and thyroid. Within the brain expression is pronounced in the cortex, hippocampus, olfactory bulb, striatum, thalamic and hypothalamic structures and in the molecular layer of the cerebellum. Largely excluded from cortical progenitor cells which express NDE1.

The protein localises to the cytoplasm. Its subcellular location is the cytoskeleton. It localises to the microtubule organizing center. It is found in the centrosome. The protein resides in the chromosome. The protein localises to the centromere. Its subcellular location is the kinetochore. It localises to the spindle. In terms of biological role, required for organization of the cellular microtubule array and microtubule anchoring at the centrosome. May regulate microtubule organization at least in part by targeting the microtubule severing protein KATNA1 to the centrosome. Also positively regulates the activity of the minus-end directed microtubule motor protein dynein. May enhance dynein-mediated microtubule sliding by targeting dynein to the microtubule plus ends. Required for several dynein- and microtubule-dependent processes such as the maintenance of Golgi integrity, the centripetal motion of secretory vesicles and the coupling of the nucleus and centrosome. Also required during brain development for the migration of newly formed neurons from the ventricular/subventricular zone toward the cortical plate. Plays a role, together with DISC1, in the regulation of neurite outgrowth. Required for mitosis in some cell types but appears to be dispensible for mitosis in cortical neuronal progenitors, which instead requires NDE1. Facilitates the polymerization of neurofilaments from the individual subunits NEFH and NEFL. Positively regulates lysosome peripheral distribution and ruffled border formation in osteoclasts. Plays a role, together with DISC1, in the regulation of neurite outgrowth. May act as a RAB9A/B effector that tethers RAB9-associated late endosomes to the dynein motor for their retrograde transport to the trans-Golgi network. The sequence is that of Nuclear distribution protein nudE-like 1 from Mus musculus (Mouse).